A 290-amino-acid polypeptide reads, in one-letter code: Glutamyl-Q tRNA(Asp) synthetase (290 aa).

L-glutamate contacts are provided by residues 9 to 13 (RFAPS) and Glu45. Positions 12 to 22 (PSPSGSLHFGS) match the 'HIGH' region motif. Cys101, Cys103, Tyr115, and Cys119 together coordinate Zn(2+). Tyr170 and Arg188 together coordinate L-glutamate. Residues 226-230 (KLSKQ) carry the 'KMSKS' region motif. Lys229 serves as a coordination point for ATP.

It belongs to the class-I aminoacyl-tRNA synthetase family. GluQ subfamily. The cofactor is Zn(2+).

Catalyzes the tRNA-independent activation of glutamate in presence of ATP and the subsequent transfer of glutamate onto a tRNA(Asp). Glutamate is transferred on the 2-amino-5-(4,5-dihydroxy-2-cyclopenten-1-yl) moiety of the queuosine in the wobble position of the QUC anticodon. The sequence is that of Glutamyl-Q tRNA(Asp) synthetase from Shewanella amazonensis (strain ATCC BAA-1098 / SB2B).